A 327-amino-acid chain; its full sequence is MGVKLKDIIQPEQIDFKDLKGRAISIDAFNTLYQFLSTIRQRDGRPLSDSNGNITSHLSGILYRNSSMIEKDIKPIYVFDGTPSYLKQETIDQRRQTREESEKKWKEALAKQDTQEARKYAMRSSKLSPYIIESSKKLLTMMGIPYIEAYGEGEAQAAYLVENGDAWAVASQDYDCLLFGAKRVVRNLAINSNLGDLEYYNLKRVLDELDINREQLIDMGILIGTDFSEGLKGVGAKTALKLAKKGELENKLAKLQEESSHDISEVREIFLNHNVNTNYKIRWKKPAKNDIIDFLCEEHGFSQDRVSKACDKLKNLNSSQKSLEDWF.

An N-domain region spans residues 1–98 (MGVKLKDIIQ…ETIDQRRQTR (98 aa)). 7 residues coordinate Mg(2+): Asp27, Asp80, Glu152, Glu154, Asp173, Asp175, and Asp226. The interval 116–246 (EARKYAMRSS…KTALKLAKKG (131 aa)) is I-domain. The segment at 319 to 327 (SQKSLEDWF) is interaction with PCNA.

Belongs to the XPG/RAD2 endonuclease family. FEN1 subfamily. Interacts with PCNA. PCNA stimulates the nuclease activity without altering cleavage specificity. It depends on Mg(2+) as a cofactor.

Functionally, structure-specific nuclease with 5'-flap endonuclease and 5'-3' exonuclease activities involved in DNA replication and repair. During DNA replication, cleaves the 5'-overhanging flap structure that is generated by displacement synthesis when DNA polymerase encounters the 5'-end of a downstream Okazaki fragment. Binds the unpaired 3'-DNA end and kinks the DNA to facilitate 5' cleavage specificity. Cleaves one nucleotide into the double-stranded DNA from the junction in flap DNA, leaving a nick for ligation. Also involved in the base excision repair (BER) pathway. Acts as a genome stabilization factor that prevents flaps from equilibrating into structures that lead to duplications and deletions. Also possesses 5'-3' exonuclease activity on nicked or gapped double-stranded DNA. In Methanobrevibacter smithii (strain ATCC 35061 / DSM 861 / OCM 144 / PS), this protein is Flap endonuclease 1.